The chain runs to 110 residues: Large ribosomal subunit protein uL22 (110 aa).

The protein belongs to the universal ribosomal protein uL22 family. In terms of assembly, part of the 50S ribosomal subunit.

This protein binds specifically to 23S rRNA; its binding is stimulated by other ribosomal proteins, e.g. L4, L17, and L20. It is important during the early stages of 50S assembly. It makes multiple contacts with different domains of the 23S rRNA in the assembled 50S subunit and ribosome. In terms of biological role, the globular domain of the protein is located near the polypeptide exit tunnel on the outside of the subunit, while an extended beta-hairpin is found that lines the wall of the exit tunnel in the center of the 70S ribosome. In Dichelobacter nodosus (strain VCS1703A), this protein is Large ribosomal subunit protein uL22.